Reading from the N-terminus, the 875-residue chain is F-box only protein 41 (875 aa).

Disordered regions lie at residues 85 to 110 (ESTS…HHHH), 165 to 194 (SSAC…PSPA), and 347 to 542 (SSSC…PSRS). The segment covering 170–182 (TPPPGPGPGPCPG) has biased composition (pro residues). Positions 183-194 (PASASPASPSPA) are enriched in low complexity. Residues 209 to 351 (ALEKLEVDRR…QLQVISSSCG (143 aa)) adopt a coiled-coil conformation. The segment covering 347-356 (SSSCGSTPSA) has biased composition (polar residues). The span at 359–368 (GRGGGGGGAG) shows a compositional bias: gly residues. Residue Arg-360 is modified to Omega-N-methylarginine. Positions 395–416 (HGSSPSTGASSRVPAASQSSGC) are enriched in polar residues. Residue Ser-478 is modified to Phosphoserine. Thr-479 bears the Phosphothreonine mark. Residues 496–540 (SEAEGPLDAPRPGPAMAGPLSSCRLSARPEGGSGRGRRAERVSPS) enclose the F-box domain. Residue Ser-762 is modified to Phosphoserine.

In terms of assembly, directly interacts with SKP1 and CUL1.

Functionally, substrate-recognition component of the SCF (SKP1-CUL1-F-box protein)-type E3 ubiquitin ligase complex. The sequence is that of F-box only protein 41 (FBXO41) from Homo sapiens (Human).